Consider the following 399-residue polypeptide: Argininosuccinate synthase (399 aa).

Residues 10 to 18 (AYSGGVDTS) and Ala-38 contribute to the ATP site. Position 89 (Tyr-89) interacts with L-citrulline. Gly-119 serves as a coordination point for ATP. L-aspartate-binding residues include Thr-121, Asn-125, and Asp-126. Asn-125 is an L-citrulline binding site. L-citrulline contacts are provided by Arg-129, Ser-177, Ser-186, Glu-262, and Tyr-274.

It belongs to the argininosuccinate synthase family. Type 1 subfamily. Homotetramer.

Its subcellular location is the cytoplasm. The catalysed reaction is L-citrulline + L-aspartate + ATP = 2-(N(omega)-L-arginino)succinate + AMP + diphosphate + H(+). It functions in the pathway amino-acid biosynthesis; L-arginine biosynthesis; L-arginine from L-ornithine and carbamoyl phosphate: step 2/3. This Rippkaea orientalis (strain PCC 8801 / RF-1) (Cyanothece sp. (strain PCC 8801)) protein is Argininosuccinate synthase.